We begin with the raw amino-acid sequence, 352 residues long: tRNA (guanine(26)-N(2))-dimethyltransferase (352 aa).

The Trm1 methyltransferase domain maps to 4-350; it reads ILNKEGAVEF…ANYDEIARIL (347 aa). 5 residues coordinate S-adenosyl-L-methionine: Arg-39, Arg-65, Asp-83, Asp-109, and Ala-110.

The protein belongs to the class I-like SAM-binding methyltransferase superfamily. Trm1 family.

The enzyme catalyses guanosine(26) in tRNA + 2 S-adenosyl-L-methionine = N(2)-dimethylguanosine(26) in tRNA + 2 S-adenosyl-L-homocysteine + 2 H(+). Dimethylates a single guanine residue at position 26 of a number of tRNAs using S-adenosyl-L-methionine as donor of the methyl groups. The protein is tRNA (guanine(26)-N(2))-dimethyltransferase of Pyrobaculum islandicum (strain DSM 4184 / JCM 9189 / GEO3).